Reading from the N-terminus, the 112-residue chain is UPF0342 protein SSU05_1260 (112 aa).

Belongs to the UPF0342 family.

This is UPF0342 protein SSU05_1260 from Streptococcus suis (strain 05ZYH33).